Consider the following 123-residue polypeptide: ATP synthase epsilon chain (123 aa).

The interval 96–123 (ESRKQSAETEHDKAVAESELRAVKRMEA) is disordered.

The protein belongs to the ATPase epsilon chain family. F-type ATPases have 2 components, CF(1) - the catalytic core - and CF(0) - the membrane proton channel. CF(1) has five subunits: alpha(3), beta(3), gamma(1), delta(1), epsilon(1). CF(0) has three main subunits: a, b and c.

Its subcellular location is the cell membrane. Its function is as follows. Produces ATP from ADP in the presence of a proton gradient across the membrane. The sequence is that of ATP synthase epsilon chain from Corynebacterium jeikeium (strain K411).